Consider the following 451-residue polypeptide: Tubulin gamma-1 chain (451 aa).

Ser131 carries the phosphoserine; by BRSK1 modification. 142-148 (AGGTGSG) serves as a coordination point for GTP.

This sequence belongs to the tubulin family. As to quaternary structure, component of the gamma-tubulin ring complex (gTuRC) consisting of TUBGCP2, TUBGCP3, TUBGCP4, TUBGCP5 and TUBGCP6 and gamma-tubulin TUBG1 or TUBG2. TUBGCP2, TUBGCP3, TUBGCP4, TUBGCP5 and TUBGCP6 assemble in a 5:5:2:1:1 stoichiometry; each is associated with a gamma-tubulin, thereby arranging 14 gamma-tubulins in a helical manner. Gamma-tubulin at the first position is blocked by TUBGCP3 at the last position, allowing 13 protafilaments to grow into a microtubule. The gTuRC (via TUBGCP3 and TUBGCP6) interacts with ACTB and MZT1; the interactions form a luminal bridge that stabilizes the initial structure during complex assembly. The gTuRC (via TUBGCP2) interacts with MZT2A/MZT2B and CDK5RAP2 (via CM1 motif); the interactions play a role in gTuRC activation. Interacts with alpha-beta tubulin heterodimers; the interaction allows microtubules to nucleate from the gTuRC. Interacts with B9D2. Interacts with CDK5RAP2; the interaction is leading to centrosomal localization of TUBG1 and CDK5RAP2. Interacts with CIMAP3. Interacts with SAS6 and NUP62 at the centrosome. Interacts with EML3 (phosphorylated at 'Thr-881') and HAUS8. Interacts with DNM2; this interaction may participate in centrosome cohesion. Interacts with CCDC66. In terms of processing, phosphorylation at Ser-131 by BRSK1 regulates centrosome duplication, possibly by mediating relocation of gamma-tubulin and its associated proteins from the cytoplasm to the centrosome.

The protein resides in the cytoplasm. It localises to the cytoskeleton. The protein localises to the microtubule organizing center. Its subcellular location is the centrosome. It is found in the spindle. In terms of biological role, tubulin is the major constituent of microtubules, protein filaments consisting of alpha- and beta-tubulin heterodimers. Gamma-tubulin is a key component of the gamma-tubulin ring complex (gTuRC) which mediates microtubule nucleation. The gTuRC regulates the minus-end nucleation of alpha-beta tubulin heterodimers that grow into microtubule protafilaments, a critical step in centrosome duplication and spindle formation. The sequence is that of Tubulin gamma-1 chain from Homo sapiens (Human).